The primary structure comprises 100 residues: Integration host factor subunit beta (100 aa).

A disordered region spans residues 53-100 (LHHRPPRIGRNPKTGEPVALPGKYVPHFKPGKELRDRVNAGRHNPIQS). Positions 82-91 (PGKELRDRVN) are enriched in basic and acidic residues.

The protein belongs to the bacterial histone-like protein family. Heterodimer of an alpha and a beta chain.

Its function is as follows. This protein is one of the two subunits of integration host factor, a specific DNA-binding protein that functions in genetic recombination as well as in transcriptional and translational control. This is Integration host factor subunit beta from Alkalilimnicola ehrlichii (strain ATCC BAA-1101 / DSM 17681 / MLHE-1).